Here is a 291-residue protein sequence, read N- to C-terminus: Ajmaline N-methyltransferase (291 aa).

The segment at 71-80 is SAM motif I; it reads MLDVGCGIGG. A Vacuolar targeting signal motif is present at residues 133–139; sequence DGAFDLV. Residues 134 to 142 form an SAM motif II region; it reads GAFDLVLSI. Residues 161 to 170 form an SAM motif III region; the sequence is VAASGATIII.

Belongs to the class I-like SAM-binding methyltransferase superfamily. gTMT family. Homodimer. In terms of tissue distribution, mainly expressed in roots, but barely detectable in stems and flowers.

It localises to the vacuole membrane. The enzyme catalyses ajmaline + S-adenosyl-L-methionine = 4-methylajmaline + S-adenosyl-L-homocysteine + H(+). It carries out the reaction norajmaline + S-adenosyl-L-methionine = 4-methylnorajmaline + S-adenosyl-L-homocysteine + H(+). It functions in the pathway alkaloid biosynthesis; ajmaline biosynthesis. Its function is as follows. N-methyltransferase involved in the biosynthesis of ajmaline-type monoterpenoid indole alkaloids (MIAs) natural products, important plant-derived pharmaceuticals used in the therapy of heart disorders. Catalyzes the indole N-methylation of ajmaline to produce 4-methylajmaline. Also able, with a lower efficiency, to mediates the conversion of norajmaline to 4-methylnorajmaline. This Rauvolfia serpentina (Serpentine wood) protein is Ajmaline N-methyltransferase.